The following is a 130-amino-acid chain: Small ribosomal subunit protein uS9 (130 aa).

A disordered region spans residues 109–130; that stretch reads RKKERKKYGQRAARARFQYSKR.

This sequence belongs to the universal ribosomal protein uS9 family.

The protein is Small ribosomal subunit protein uS9 of Oleidesulfovibrio alaskensis (strain ATCC BAA-1058 / DSM 17464 / G20) (Desulfovibrio alaskensis).